The primary structure comprises 91 residues: Metalloproteinase inhibitor 2 (91 aa).

In terms of domain architecture, NTR spans 1-91 (KAVSEKEVDS…FIVPWDTLST (91 aa)).

Belongs to the protease inhibitor I35 (TIMP) family. Post-translationally, the activity of TIMP2 is dependent on the presence of disulfide bonds.

The protein resides in the secreted. In terms of biological role, complexes with metalloproteinases (such as collagenases) and irreversibly inactivates them. In Equus caballus (Horse), this protein is Metalloproteinase inhibitor 2 (TIMP2).